The primary structure comprises 321 residues: Large ribosomal RNA subunit accumulation protein YCED homolog 1, chloroplastic (321 aa).

A chloroplast-targeting transit peptide spans 1–32 (MSLVCSLSCVAPLPQTKQSRPSFLKLETCTLS).

It belongs to the DUF177 domain family.

It is found in the plastid. Its subcellular location is the chloroplast stroma. It localises to the chloroplast nucleoid. In terms of biological role, plays a role in synthesis, processing and/or stability of 23S rRNA. Required for embryogenesis. This Arabidopsis thaliana (Mouse-ear cress) protein is Large ribosomal RNA subunit accumulation protein YCED homolog 1, chloroplastic.